The primary structure comprises 1159 residues: WASH complex subunit 5 (1159 aa).

The residue at position 917 (S917) is a Phosphoserine.

It belongs to the strumpellin family. In terms of assembly, component of the WASH core complex also described as WASH regulatory complex (SHRC) composed of WASH (WASHC1, WASH2P or WASH3P), WASHC2 (WASHC2A or WASHC2C), WASHC3, WASHC4 and WASHC5. The WASH core complex associates via WASHC2 with the F-actin-capping protein dimer (formed by CAPZA1, CAPZA2 or CAPZA3 and CAPZB) in a transient or substoichiometric manner which was initially described as WASH complex. Interacts with VCP, PI4K2A. In terms of tissue distribution, expressed ubiquitously.

Its subcellular location is the cytoplasm. The protein resides in the cytosol. It is found in the endoplasmic reticulum. The protein localises to the early endosome. Its function is as follows. Acts as a component of the WASH core complex that functions as a nucleation-promoting factor (NPF) at the surface of endosomes, where it recruits and activates the Arp2/3 complex to induce actin polymerization, playing a key role in the fission of tubules that serve as transport intermediates during endosome sorting. May be involved in axonal outgrowth. Involved in cellular localization of ADRB2. Involved in cellular trafficking of BLOC-1 complex cargos such as ATP7A and VAMP7. This chain is WASH complex subunit 5, found in Homo sapiens (Human).